A 169-amino-acid polypeptide reads, in one-letter code: MSDLTKQMIYDIYVRLLHLNEQKANTSLQQFFKEAAEEDVAEIPKNMTSIHVIDCIGQHEPINNAGIARKMNLSKANVTKISTKLIKEEFINSYQLTDNKKEVYFKLTRKGRRIFDLHEKLHKKKELAFYQFLDSFSQEEQKAVLKFLEQLTSTLEAEQTDGTPDKPVK.

The region spanning 10–153 (YDIYVRLLHL…VLKFLEQLTS (144 aa)) is the HTH marR-type domain. A DNA-binding region (H-T-H motif) is located at residues 64–87 (NAGIARKMNLSKANVTKISTKLIK).

As to quaternary structure, homodimer.

In terms of biological role, represses the expression of the yvmC-cypX operon, which is involved in pulcherriminic acid biosynthesis. Also negatively regulates yvmA, yvnB and its own expression. Positively regulates yisI expression. Acts by binding specifically to a 14-bp palindromic motif, the YvmB box, which is present in the promoter region of the target genes. This chain is HTH-type transcriptional regulator PchR, found in Bacillus subtilis (strain 168).